The sequence spans 107 residues: Serine palmitoyltransferase-regulating protein TSC3 (107 aa).

A helical membrane pass occupies residues 72-92 (VFFLVVFTLSLFGLLKWVLSL).

The protein resides in the endoplasmic reticulum membrane. Stimulates the activity of serine palmitoyltransferase (SPT). This is Serine palmitoyltransferase-regulating protein TSC3 (TSC3) from Eremothecium gossypii (strain ATCC 10895 / CBS 109.51 / FGSC 9923 / NRRL Y-1056) (Yeast).